The primary structure comprises 534 residues: Low affinity inorganic phosphate transporter 1 (534 aa).

Over 1–23 (MAKDLQVLTALDVAKTQLYHFTA) the chain is Cytoplasmic. A helical membrane pass occupies residues 24-44 (IVIAGMGFFTDAYDLFCISLV). The Extracellular portion of the chain corresponds to 45–69 (TKLLGRIYYHHEGALKPGSLPPNVA). A helical transmembrane segment spans residues 70–90 (AAVNGVAFCGTLAGQLFFGWL). Topologically, residues 91–98 (GDKLGRKK) are cytoplasmic. A helical transmembrane segment spans residues 99–119 (VYGMTLMLMVICSIASGLSFG). At 120 to 124 (HTPKS) the chain is on the extracellular side. The helical transmembrane segment at 125-145 (VMATLCFFRFWLGFGIGGDYP) threads the bilayer. The Cytoplasmic segment spans residues 146-163 (LSATIMSEYANKKTRGAF). A helical transmembrane segment spans residues 164–184 (IAAVFAMQGFGILAGGMVAII). The Extracellular portion of the chain corresponds to 185 to 210 (VSAAFKNQFPAPAYKDGALASTISQA). Residues 211-231 (DFVWRIIVMFGAIPTALTYYW) traverse the membrane as a helical segment. The Cytoplasmic portion of the chain corresponds to 232 to 290 (RMKMPETARYTALVAKNLKQATNDMSKVLQVEIEPEQEKVEEISQGNDFGLFTKQFLRR). A helical transmembrane segment spans residues 291–311 (HGLHLLGTASTWFLLDIAFYS). Topologically, residues 312-343 (QNLFQKDIFSAIGWIPPAETMNALEEVYRIAR) are extracellular. A helical membrane pass occupies residues 344 to 364 (AQTLIALCSTVPGYWFTVAFI). Residues 365 to 369 (DKIGR) are Cytoplasmic-facing. The helical transmembrane segment at 370-390 (FAIQLMGFFFMTVFMFALAIP) threads the bilayer. At 391-400 (YTHWTHKDNR) the chain is on the extracellular side. The helical transmembrane segment at 401-421 (IGFVIMYSLTFFFANFGPNAT) threads the bilayer. The Cytoplasmic portion of the chain corresponds to 422–440 (TFVVPAEIFPARLRSTCHG). Residues 441-461 (ISAAAGKAGAMVGAFGFLYAA) traverse the membrane as a helical segment. Residues 462-481 (QSTDPKKTDAGYPAGIGVRN) lie on the Extracellular side of the membrane. The chain crosses the membrane as a helical span at residues 482 to 502 (SLIVLGCVNFLGMLFTLLVPE). Over 503–534 (SKGKSLEEMSRENEGEDENGTEMRASGRTVPV) the chain is Cytoplasmic. Positions 507-534 (SLEEMSRENEGEDENGTEMRASGRTVPV) are disordered.

It belongs to the major facilitator superfamily. Phosphate:H(+) symporter (TC 2.A.1.9) family.

It localises to the cell membrane. It carries out the reaction phosphate(in) + H(+)(in) = phosphate(out) + H(+)(out). Functionally, low-affinity transporter for external inorganic phosphate (Pi). Involved in phosphorus (P) remobilization from dying to developing tissues during corolla senescence in an ethylene-dependent manner. This is Low affinity inorganic phosphate transporter 1 from Petunia hybrida (Petunia).